Here is a 112-residue protein sequence, read N- to C-terminus: Cell cycle protein GpsB (112 aa).

Residues 32 to 75 are a coiled coil; it reads LDDIIKDYETYISTIEELRQENTRLKEEVKQAKKRQEAAQTTVS.

Belongs to the GpsB family. As to quaternary structure, forms polymers through the coiled coil domains. Interacts with PBP1, MreC and EzrA.

It localises to the cytoplasm. Its function is as follows. Divisome component that associates with the complex late in its assembly, after the Z-ring is formed, and is dependent on DivIC and PBP2B for its recruitment to the divisome. Together with EzrA, is a key component of the system that regulates PBP1 localization during cell cycle progression. Its main role could be the removal of PBP1 from the cell pole after pole maturation is completed. Also contributes to the recruitment of PBP1 to the division complex. Not essential for septum formation. In Streptococcus mutans serotype c (strain ATCC 700610 / UA159), this protein is Cell cycle protein GpsB.